The sequence spans 389 residues: Stilbene synthase 3 (389 aa).

55–58 (KFQR) is a substrate binding site. Residue C164 is part of the active site. Residues L267 and 305 to 307 (GGR) each bind substrate.

This sequence belongs to the thiolase-like superfamily. Chalcone/stilbene synthases family. In terms of assembly, homodimer.

The protein localises to the cytoplasm. The enzyme catalyses 4-coumaroyl-CoA + 3 malonyl-CoA + 3 H(+) = trans-resveratrol + 4 CO2 + 4 CoA. It participates in phytoalexin biosynthesis; 3,4',5-trihydroxystilbene biosynthesis; 3,4',5-trihydroxystilbene from trans-4-coumarate: step 2/2. The polypeptide is Stilbene synthase 3 (Arachis hypogaea (Peanut)).